The primary structure comprises 228 residues: Superoxide dismutase [Mn] (228 aa).

A signal peptide spans 1–23 (MTRSLKTTLILLASSVISMSALA). The Mn(2+) site is built by His49, His100, Asp188, and His192.

Belongs to the iron/manganese superoxide dismutase family. Mn(2+) is required as a cofactor.

The protein localises to the periplasm. The enzyme catalyses 2 superoxide + 2 H(+) = H2O2 + O2. Destroys superoxide anion radicals which are normally produced within the cells and which are toxic to biological systems. The chain is Superoxide dismutase [Mn] (sodA) from Acinetobacter baylyi (strain ATCC 33305 / BD413 / ADP1).